The following is a 351-amino-acid chain: Protein RecA (351 aa).

73–80 (GPESSGKT) serves as a coordination point for ATP.

The protein belongs to the RecA family.

It localises to the cytoplasm. Its function is as follows. Can catalyze the hydrolysis of ATP in the presence of single-stranded DNA, the ATP-dependent uptake of single-stranded DNA by duplex DNA, and the ATP-dependent hybridization of homologous single-stranded DNAs. It interacts with LexA causing its activation and leading to its autocatalytic cleavage. This chain is Protein RecA, found in Herbaspirillum seropedicae.